The chain runs to 306 residues: Manganese-binding lipoprotein MntA (306 aa).

The signal sequence occupies residues 1 to 18 (MRQGLMAAVLFATFALTG). C19 is lipidated: N-palmitoyl cysteine. C19 is lipidated: S-diacylglycerol cysteine. Residues H66, H132, H198, and D278 each coordinate Mn(2+).

Belongs to the bacterial solute-binding protein 9 family. As to quaternary structure, the complex is probably composed of two ATP-binding proteins (MntB), two transmembrane proteins (MntC and MntD) and a solute-binding protein (MntA). Interacts with FloT.

The protein localises to the cell membrane. The protein resides in the membrane raft. Functionally, probably part of ATP-binding cassette (ABC) transport system MntABCD involved in manganese import. Binds manganese and delivers it to the membrane permease for translocation into the cytoplasm. This is Manganese-binding lipoprotein MntA from Bacillus subtilis (strain 168).